The following is a 450-amino-acid chain: MGKYFGTDGVRGEANVELTPELAFKLGRFGGYVLSQHETERPRVFVARDTRISGEMLEAALIAGLLSVGIEVYKLGVLATPGVSYLVRTEKASAGVMISASHNPALDNGIKFFGSDGFKLADEQELEIEALLDAKEDLLPRPSAEGLGALVDYPEGLRKYERFLVTTGADLDGLKIALDTANGAASVSARNVFLDLNADITVIGEKPNGLNINDGIGSTHPEKLQDLVTETASDIGLAFDGDSDRLIAVDENGAIVDGDKIMFIIGKYLSEKGLLAKNTIVTTVMSNLGFHKALDSCGIHKKVTAVGDRYVVEEMRQFGYNLGGEQSGHVIIMDYNTTGDGQLTAVQLTKIMKETGKTLSELASEVTIYPQKLVNIRVDNSMKERAMEVPAIAEVIAQMEGEMAGNGRILVRPSGTEPLLRVMAEAPSNEEVDYYVDTIAAVVRAEIGLD.

Catalysis depends on serine 101, which acts as the Phosphoserine intermediate. Residues serine 101, aspartate 240, aspartate 242, and aspartate 244 each coordinate Mg(2+). Residue serine 101 is modified to Phosphoserine.

Belongs to the phosphohexose mutase family. Requires Mg(2+) as cofactor. In terms of processing, activated by phosphorylation.

It catalyses the reaction alpha-D-glucosamine 1-phosphate = D-glucosamine 6-phosphate. Its function is as follows. Catalyzes the conversion of glucosamine-6-phosphate to glucosamine-1-phosphate. This is Phosphoglucosamine mutase from Streptococcus equi subsp. equi (strain 4047).